Here is a 122-residue protein sequence, read N- to C-terminus: MARLAGVDLPRNKRMEVALTYIYGIGPARAKELLEKTGISPDLRTDNLDDDQLSALRDVIEATWKVEGDLRRQVQADIRRKIEIGCYQGIRHRRGLPVRGQRTKTNARTRKGPKKTIAGKKK.

Residues Gly-95–Lys-122 form a disordered region.

It belongs to the universal ribosomal protein uS13 family. In terms of assembly, part of the 30S ribosomal subunit. Forms a loose heterodimer with protein S19. Forms two bridges to the 50S subunit in the 70S ribosome.

Located at the top of the head of the 30S subunit, it contacts several helices of the 16S rRNA. In the 70S ribosome it contacts the 23S rRNA (bridge B1a) and protein L5 of the 50S subunit (bridge B1b), connecting the 2 subunits; these bridges are implicated in subunit movement. Contacts the tRNAs in the A and P-sites. This chain is Small ribosomal subunit protein uS13, found in Corynebacterium aurimucosum (strain ATCC 700975 / DSM 44827 / CIP 107346 / CN-1) (Corynebacterium nigricans).